The primary structure comprises 254 residues: Triosephosphate isomerase (254 aa).

Residue 12 to 14 (NWK) coordinates substrate. The active-site Electrophile is His99. Glu169 serves as the catalytic Proton acceptor. Residues Gly175, Ser214, and 235 to 236 (GG) contribute to the substrate site.

This sequence belongs to the triosephosphate isomerase family. Homodimer.

Its subcellular location is the cytoplasm. It carries out the reaction D-glyceraldehyde 3-phosphate = dihydroxyacetone phosphate. Its pathway is carbohydrate biosynthesis; gluconeogenesis. It functions in the pathway carbohydrate degradation; glycolysis; D-glyceraldehyde 3-phosphate from glycerone phosphate: step 1/1. Its function is as follows. Involved in the gluconeogenesis. Catalyzes stereospecifically the conversion of dihydroxyacetone phosphate (DHAP) to D-glyceraldehyde-3-phosphate (G3P). This Brucella melitensis biotype 1 (strain ATCC 23456 / CCUG 17765 / NCTC 10094 / 16M) protein is Triosephosphate isomerase.